The following is a 209-amino-acid chain: Large ribosomal subunit protein uL4 (209 aa).

Positions 47–72 (TSSTKTRSEVRGSSKKPWKQKGTGRA) are disordered. A compositionally biased stretch (basic residues) spans 59-72 (SSKKPWKQKGTGRA).

Belongs to the universal ribosomal protein uL4 family. Part of the 50S ribosomal subunit.

In terms of biological role, one of the primary rRNA binding proteins, this protein initially binds near the 5'-end of the 23S rRNA. It is important during the early stages of 50S assembly. It makes multiple contacts with different domains of the 23S rRNA in the assembled 50S subunit and ribosome. Forms part of the polypeptide exit tunnel. The sequence is that of Large ribosomal subunit protein uL4 from Borreliella burgdorferi (strain ZS7) (Borrelia burgdorferi).